Here is a 145-residue protein sequence, read N- to C-terminus: Large ribosomal subunit protein uL15 (145 aa).

Residues 1-58 are disordered; that stretch reads MFNLLKPKGASKRRKIVGRGPGSGLGKTSGRGQKGQKARNTSPRLGFEGGQTPLYRRL. Residues 19–33 show a composition bias toward gly residues; sequence RGPGSGLGKTSGRGQ.

It belongs to the universal ribosomal protein uL15 family. Part of the 50S ribosomal subunit.

Binds to the 23S rRNA. This Borrelia garinii subsp. bavariensis (strain ATCC BAA-2496 / DSM 23469 / PBi) (Borreliella bavariensis) protein is Large ribosomal subunit protein uL15.